We begin with the raw amino-acid sequence, 335 residues long: MWWPMLWAFPVLLCLCSSQALGQESGACPDVKIVGLGAQDKVAVIQSCPSFPGPPGPKGEPGSPAGRGERGLQGSPGKMGPPGSKGEPGTMGPPGVKGEKGERGTASPLGQKELGDALCRRGPRSCKDLLTRGIFLTGWYTIYLPDCRPLTVLCDMDVDGGGWTVFQRRVDGSINFYRDWDSYKRGFGNLGTEFWLGNDYLHLLTANGNQELRVDLREFQGQTSFAKYSSFQVSGEQEKYKLTLGQFLEGTAGDSLTKHNNMAFSTHDQDNDTNGGKNCAALFHGAWWYHDCHQSNLNGRYLPGSHESYADGINWLSGRGHRYSYKVAEMKIRAS.

A signal peptide spans 1–17; that stretch reads MWWPMLWAFPVLLCLCS. Positions 47-114 are disordered; that stretch reads SCPSFPGPPG…TASPLGQKEL (68 aa). One can recognise a Collagen-like domain in the interval 50–88; the sequence is SFPGPPGPKGEPGSPAGRGERGLQGSPGKMGPPGSKGEP. A compositionally biased stretch (low complexity) spans 75–88; it reads SPGKMGPPGSKGEP. Residues 117-335 form the Fibrinogen C-terminal domain; sequence ALCRRGPRSC…KVAEMKIRAS (219 aa). Disulfide bonds link Cys-119/Cys-147 and Cys-126/Cys-154. The a domain; contributes to trimerization stretch occupies residues 123-162; the sequence is PRSCKDLLTRGIFLTGWYTIYLPDCRPLTVLCDMDVDGGG. Residues 163–251 form a b domain; contributes to trimerization region; it reads WTVFQRRVDG…LTLGQFLEGT (89 aa). Residue Asp-270 participates in Ca(2+) binding. N-linked (GlcNAc...) asparagine glycosylation occurs at Asn-271. Asp-272 contacts Ca(2+). The cysteines at positions 279 and 292 are disulfide-linked. 291–293 is an a carbohydrate binding site; it reads DCH. Residues 326–335 form a p domain region; the sequence is KVAEMKIRAS.

It belongs to the ficolin lectin family. As to quaternary structure, homotrimer. Interacts with elastin/ELN. Interacts (via Fibrinogen C-terminal domain) with FFAR2. Interacts with CRP; may regulate monocyte activation by FCN1.

The protein resides in the secreted. It is found in the cell membrane. In terms of biological role, extracellular lectin functioning as a pattern-recognition receptor in innate immunity. Binds the sugar moieties of pathogen-associated molecular patterns (PAMPs) displayed on microbes and activates the lectin pathway of the complement system. May also activate monocytes through a G protein-coupled receptor, FFAR2, inducing the secretion of interleukin-8/IL-8. Binds preferentially to 9-O-acetylated 2-6-linked sialic acid derivatives and to various glycans containing sialic acid engaged in a 2-3 linkage. The sequence is that of Ficolin-1 (Fcn1) from Rattus norvegicus (Rat).